The sequence spans 274 residues: Glycerol uptake facilitator protein (274 aa).

The next 2 membrane-spanning stretches (helical) occupy residues 3–23 and 38–58; these read AFWG…GVCA and IVVV…VGGI. The NPA 1 motif lies at 64–66; it reads NPA. 3 consecutive transmembrane segments (helical) span residues 82-102, 131-151, and 164-184; these read VPVY…IIYL, FANV…ILAI, and IVGF…GYAI. The short motif at 185–187 is the NPA 2 element; sequence NPA. A helical membrane pass occupies residues 238–258; sequence ITSSFWIVSVILVVVLLGLYV.

It belongs to the MIP/aquaporin (TC 1.A.8) family.

It is found in the cell membrane. The enzyme catalyses glycerol(in) = glycerol(out). Functionally, mediates glycerol diffusion across the cytoplasmic membrane via a pore-type mechanism. The protein is Glycerol uptake facilitator protein (glpF) of Bacillus subtilis (strain 168).